Consider the following 37-residue polypeptide: Photosystem I reaction center subunit VIII (37 aa).

Residues 9–29 traverse the membrane as a helical segment; sequence SIFVPLVGLVFPAIAMASLFL.

This sequence belongs to the PsaI family.

It localises to the plastid. Its subcellular location is the chloroplast thylakoid membrane. May help in the organization of the PsaL subunit. This chain is Photosystem I reaction center subunit VIII, found in Cucumis sativus (Cucumber).